The primary structure comprises 316 residues: MNNVLKNAGLFLRLFWLRFQQNKLSQAAGYLTYSTMLALVPLVMVVFSVFSAFPVFNEVTDELKGFIFNNFAPQASDMVGQYIDEFVSNSKQMSAVGVISLVVVALMLINSIDRTLNSIWHDTTIRPLVFSFAIYWLILTLGPLLIGASIGVSSYIAAMLNENISLPFGLKILSFVPFFLTWLIFTLIYTVVPNKKVKIMHSAIGALVAAVFFTLGKQAFLWYVTTFPSYQLIYGAMATLPIMLLWIQLSWVVILIGAQLASVLADYTLCTQGKIRVEELVAADTHEPALQQKMEKTEQTLKTEITQQKQRLEKQG.

Transmembrane regions (helical) follow at residues 36–56 (MLAL…FPVF), 92–112 (QMSA…INSI), 128–148 (LVFS…LIGA), 172–192 (ILSF…YTVV), 204–224 (IGAL…LWYV), and 236–256 (AMAT…VILI).

It belongs to the UPF0761 family.

It is found in the cell inner membrane. The chain is UPF0761 membrane protein PM1616 from Pasteurella multocida (strain Pm70).